The sequence spans 432 residues: MPVLNLKSDLADADDLETLMAGIGRRARAAGRAMALAPAQTKDLGLRAIAEQIRTSAPAILRENARDVSAAQAAGLTNAIIDRLTLDEGRVAAIAEAVEKVAGLADPVGRQLAAFERPNGLLIERISVPLGVVGVIFESRPNVTADAGALCLKAGNAAILRAGSDSHRTATAIAAAMSEGLARAGLPADAIQLVPTRDRAAVGLMLTGLGGCVDVIVPRGGRSLVERVQAEAKVPVFAHLDGICHVYVAEGADLGMARSLLLNSKMRRTGICGAAETLLVDAAVAETHLKPLVEALLESGCAVRGDAATQAADPRVSAATDADWRTEYLDAIISAKVVDGLDAAIAHIEANGSHHTDAIITDDTNAAARFLNEVDSAIVTHNASTQFADGGEFGFGAEIGIATGRMHARGPVGVEQLTTFKYRVHGSGQTRP.

This sequence belongs to the gamma-glutamyl phosphate reductase family.

Its subcellular location is the cytoplasm. The enzyme catalyses L-glutamate 5-semialdehyde + phosphate + NADP(+) = L-glutamyl 5-phosphate + NADPH + H(+). Its pathway is amino-acid biosynthesis; L-proline biosynthesis; L-glutamate 5-semialdehyde from L-glutamate: step 2/2. In terms of biological role, catalyzes the NADPH-dependent reduction of L-glutamate 5-phosphate into L-glutamate 5-semialdehyde and phosphate. The product spontaneously undergoes cyclization to form 1-pyrroline-5-carboxylate. The chain is Gamma-glutamyl phosphate reductase from Methylorubrum extorquens (strain CM4 / NCIMB 13688) (Methylobacterium extorquens).